We begin with the raw amino-acid sequence, 200 residues long: Protein Mbur_1344 (200 aa).

Residues S5–E192 enclose the AMMECR1 domain.

The polypeptide is Protein Mbur_1344 (Methanococcoides burtonii (strain DSM 6242 / NBRC 107633 / OCM 468 / ACE-M)).